We begin with the raw amino-acid sequence, 444 residues long: Xylose isomerase (444 aa).

Residues H101 and D104 contribute to the active site. Mg(2+) is bound by residues E232, E268, H271, D296, D307, D309, and D339.

It belongs to the xylose isomerase family. In terms of assembly, homotetramer. Mg(2+) serves as cofactor.

Its subcellular location is the cytoplasm. It catalyses the reaction alpha-D-xylose = alpha-D-xylulofuranose. The sequence is that of Xylose isomerase from Thermotoga petrophila (strain ATCC BAA-488 / DSM 13995 / JCM 10881 / RKU-1).